Consider the following 69-residue polypeptide: U5-agatoxin-Ao1a (69 aa).

The signal sequence occupies residues 1-20 (MRTIISLLLLSAMVFAVIEA). The propeptide occupies 21-34 (ISLEEGLQLFEGER). Cystine bridges form between cysteine 36-cysteine 52 and cysteine 43-cysteine 57.

It belongs to the neurotoxin 01 (U2-agtx) family. Post-translationally, does not contain a cysteine at position 61 which disrupts the cysteine framework. Expressed by the venom gland.

It is found in the secreted. The chain is U5-agatoxin-Ao1a from Agelena orientalis (Funnel-web spider).